The primary structure comprises 116 residues: Large ribosomal subunit protein uL23 (116 aa).

This sequence belongs to the universal ribosomal protein uL23 family. As to quaternary structure, part of the 50S ribosomal subunit. Contacts protein L29, and trigger factor when it is bound to the ribosome.

Its function is as follows. One of the early assembly proteins it binds 23S rRNA. One of the proteins that surrounds the polypeptide exit tunnel on the outside of the ribosome. Forms the main docking site for trigger factor binding to the ribosome. The protein is Large ribosomal subunit protein uL23 of Psychrobacter sp. (strain PRwf-1).